A 286-amino-acid polypeptide reads, in one-letter code: MQKLTLPAPAKLNLWLHIIGRRADGYHELETVFQFLDHGDELSFALRDDGVIRLHTEIEAVPHDSNLIVRAARMLQAQSGTTLGADIWLTKVLPMGGGIGGGSSDAATTLLALAHLWQLDWDEDRLAALGLSLGADVPVFVRGHAAFAQGVGEQLTPVDPIEPWYVVLVPQVSVSTVEIFSHPQLTRDSLPLKMRPVPEGNSRNDCQPVVEQNYPQVRNALNSLGKFTEARLTGTGSCVFGAFPSKAEADKVLALLSATQTGFVAKGSNISMLHRKLQSLVKKSSA.

The active site involves K11. P94–S104 contributes to the ATP binding site. D136 is an active-site residue.

This sequence belongs to the GHMP kinase family. IspE subfamily.

The enzyme catalyses 4-CDP-2-C-methyl-D-erythritol + ATP = 4-CDP-2-C-methyl-D-erythritol 2-phosphate + ADP + H(+). Its pathway is isoprenoid biosynthesis; isopentenyl diphosphate biosynthesis via DXP pathway; isopentenyl diphosphate from 1-deoxy-D-xylulose 5-phosphate: step 3/6. In terms of biological role, catalyzes the phosphorylation of the position 2 hydroxy group of 4-diphosphocytidyl-2C-methyl-D-erythritol. The protein is 4-diphosphocytidyl-2-C-methyl-D-erythritol kinase of Pseudomonas putida (strain ATCC 700007 / DSM 6899 / JCM 31910 / BCRC 17059 / LMG 24140 / F1).